The sequence spans 673 residues: UvrABC system protein B (673 aa).

The 388-residue stretch at 30–417 (NSILLGNKYQ…SSVVVDQIIR (388 aa)) folds into the Helicase ATP-binding domain. 43-50 (GVTGSGKT) lines the ATP pocket. A Beta-hairpin motif is present at residues 96 to 119 (YYDYYQPESYVPSKDLFIEKEATI). The 167-residue stretch at 434 to 600 (QMEDLYSEIQ…TIVKKIQNIL (167 aa)) folds into the Helicase C-terminal domain. In terms of domain architecture, UVR spans 627–662 (KKLIDKLKFDLEEAVNDERFEDAIVLRDKIKELSSK).

The protein belongs to the UvrB family. In terms of assembly, forms a heterotetramer with UvrA during the search for lesions. Interacts with UvrC in an incision complex.

Its subcellular location is the cytoplasm. The UvrABC repair system catalyzes the recognition and processing of DNA lesions. A damage recognition complex composed of 2 UvrA and 2 UvrB subunits scans DNA for abnormalities. Upon binding of the UvrA(2)B(2) complex to a putative damaged site, the DNA wraps around one UvrB monomer. DNA wrap is dependent on ATP binding by UvrB and probably causes local melting of the DNA helix, facilitating insertion of UvrB beta-hairpin between the DNA strands. Then UvrB probes one DNA strand for the presence of a lesion. If a lesion is found the UvrA subunits dissociate and the UvrB-DNA preincision complex is formed. This complex is subsequently bound by UvrC and the second UvrB is released. If no lesion is found, the DNA wraps around the other UvrB subunit that will check the other stand for damage. The chain is UvrABC system protein B from Borreliella burgdorferi (strain ATCC 35210 / DSM 4680 / CIP 102532 / B31) (Borrelia burgdorferi).